Here is a 232-residue protein sequence, read N- to C-terminus: Ribonuclease 3 (232 aa).

An RNase III domain is found at 5–134 (ENLLFDRFGL…FLGALLLDKG (130 aa)). Glu-47 provides a ligand contact to Mg(2+). Asp-51 is an active-site residue. Asp-120 and Glu-123 together coordinate Mg(2+). Glu-123 is an active-site residue. Residues 160–229 (DYKTKLQELL…AKNAFEKENH (70 aa)) enclose the DRBM domain.

This sequence belongs to the ribonuclease III family. In terms of assembly, homodimer. Mg(2+) is required as a cofactor.

It is found in the cytoplasm. The catalysed reaction is Endonucleolytic cleavage to 5'-phosphomonoester.. Digests double-stranded RNA. Involved in the processing of primary rRNA transcript to yield the immediate precursors to the large and small rRNAs (23S and 16S). Processes some mRNAs, and tRNAs when they are encoded in the rRNA operon. Processes pre-crRNA and tracrRNA of type II CRISPR loci if present in the organism. This is Ribonuclease 3 from Streptococcus gordonii (strain Challis / ATCC 35105 / BCRC 15272 / CH1 / DL1 / V288).